A 940-amino-acid polypeptide reads, in one-letter code: DNA gyrase subunit A (940 aa).

The tract at residues 1–22 (MSDHTNPPSAPPDDDPNGGSLL) is disordered. Residues 48-538 (LPDARDGLKP…SLADQDDESL (491 aa)) form the Topo IIA-type catalytic domain. Catalysis depends on Tyr-136, which acts as the O-(5'-phospho-DNA)-tyrosine intermediate. Positions 565–571 (QHRGGRG) match the GyrA-box motif. Acidic residues predominate over residues 914 to 924 (ESVDDNGDDAD). A disordered region spans residues 914–940 (ESVDDNGDDADSVAPAAPDGQVTDSDD).

The protein belongs to the type II topoisomerase GyrA/ParC subunit family. As to quaternary structure, heterotetramer, composed of two GyrA and two GyrB chains. In the heterotetramer, GyrA contains the active site tyrosine that forms a transient covalent intermediate with DNA, while GyrB binds cofactors and catalyzes ATP hydrolysis.

It is found in the cytoplasm. The catalysed reaction is ATP-dependent breakage, passage and rejoining of double-stranded DNA.. In terms of biological role, a type II topoisomerase that negatively supercoils closed circular double-stranded (ds) DNA in an ATP-dependent manner to modulate DNA topology and maintain chromosomes in an underwound state. Negative supercoiling favors strand separation, and DNA replication, transcription, recombination and repair, all of which involve strand separation. Also able to catalyze the interconversion of other topological isomers of dsDNA rings, including catenanes and knotted rings. Type II topoisomerases break and join 2 DNA strands simultaneously in an ATP-dependent manner. This Granulibacter bethesdensis (strain ATCC BAA-1260 / CGDNIH1) protein is DNA gyrase subunit A.